The primary structure comprises 489 residues: COX3 mRNA-specific translational activator PET494 (489 aa).

Its subcellular location is the mitochondrion inner membrane. Its function is as follows. Required for the expression of the mitochondrial gene for cytochrome c oxidase subunit III (COX3). The sequence is that of COX3 mRNA-specific translational activator PET494 (PET494) from Saccharomyces bayanus (Yeast).